The following is a 294-amino-acid chain: UPF0761 membrane protein MADE_1017605/MADE_1018330 (294 aa).

Transmembrane regions (helical) follow at residues 45–65 (LLSL…FPAF), 99–119 (ASQM…MLIS), 141–161 (FAIY…SVVV), 182–202 (FLLS…LYMV), 213–233 (AFVG…GFAL), and 247–267 (ALAV…IVLF).

It belongs to the UPF0761 family.

The protein localises to the cell inner membrane. The chain is UPF0761 membrane protein MADE_1017605/MADE_1018330 from Alteromonas mediterranea (strain DSM 17117 / CIP 110805 / LMG 28347 / Deep ecotype).